The chain runs to 236 residues: MTPRLFALIPCAGTGSRSGSAVPKQYRTLAGRALLHYTLAAFDACSEFAQTLVVLAPDDTHFDARRFAGLRFAVRRCGGGSRQASVLNGLLGLAEFGATDQDWVLVHDAARPGITPTLIRTLVATLKDDPVGGILALPVADTLKRVPTGGDAIARTESRDALWQAQTPQMFRIGMLRDAILRAQREGHDLTDEASAIEWAGHTPRVVQGSLRNFKVTYPEDFALAEAILAAPAHAS.

It belongs to the IspD/TarI cytidylyltransferase family. IspD subfamily.

It catalyses the reaction 2-C-methyl-D-erythritol 4-phosphate + CTP + H(+) = 4-CDP-2-C-methyl-D-erythritol + diphosphate. It functions in the pathway isoprenoid biosynthesis; isopentenyl diphosphate biosynthesis via DXP pathway; isopentenyl diphosphate from 1-deoxy-D-xylulose 5-phosphate: step 2/6. Its function is as follows. Catalyzes the formation of 4-diphosphocytidyl-2-C-methyl-D-erythritol from CTP and 2-C-methyl-D-erythritol 4-phosphate (MEP). In Burkholderia vietnamiensis (strain G4 / LMG 22486) (Burkholderia cepacia (strain R1808)), this protein is 2-C-methyl-D-erythritol 4-phosphate cytidylyltransferase.